Reading from the N-terminus, the 284-residue chain is 4-diphosphocytidyl-2-C-methyl-D-erythritol kinase (284 aa).

Residue K14 is part of the active site. 97 to 107 (PMGGGVGGGSS) serves as a coordination point for ATP. D139 is an active-site residue.

This sequence belongs to the GHMP kinase family. IspE subfamily.

It catalyses the reaction 4-CDP-2-C-methyl-D-erythritol + ATP = 4-CDP-2-C-methyl-D-erythritol 2-phosphate + ADP + H(+). The protein operates within isoprenoid biosynthesis; isopentenyl diphosphate biosynthesis via DXP pathway; isopentenyl diphosphate from 1-deoxy-D-xylulose 5-phosphate: step 3/6. Catalyzes the phosphorylation of the position 2 hydroxy group of 4-diphosphocytidyl-2C-methyl-D-erythritol. The chain is 4-diphosphocytidyl-2-C-methyl-D-erythritol kinase from Pseudoalteromonas translucida (strain TAC 125).